Consider the following 406-residue polypeptide: 4-hydroxy-3-methylbut-2-en-1-yl diphosphate synthase (ferredoxin) (406 aa).

Residues C313, C316, C347, and E354 each contribute to the [4Fe-4S] cluster site.

This sequence belongs to the IspG family. [4Fe-4S] cluster is required as a cofactor.

The enzyme catalyses (2E)-4-hydroxy-3-methylbut-2-enyl diphosphate + 2 oxidized [2Fe-2S]-[ferredoxin] + H2O = 2-C-methyl-D-erythritol 2,4-cyclic diphosphate + 2 reduced [2Fe-2S]-[ferredoxin] + H(+). It functions in the pathway isoprenoid biosynthesis; isopentenyl diphosphate biosynthesis via DXP pathway; isopentenyl diphosphate from 1-deoxy-D-xylulose 5-phosphate: step 5/6. Functionally, converts 2C-methyl-D-erythritol 2,4-cyclodiphosphate (ME-2,4cPP) into 1-hydroxy-2-methyl-2-(E)-butenyl 4-diphosphate. The sequence is that of 4-hydroxy-3-methylbut-2-en-1-yl diphosphate synthase (ferredoxin) from Picosynechococcus sp. (strain ATCC 27264 / PCC 7002 / PR-6) (Agmenellum quadruplicatum).